A 455-amino-acid chain; its full sequence is MALWGGRFQGETSALFKLFNDSLPVDYRLFEQDVVGSIAWADAIASVGIITATECSDLKKALNELLVEVKGDPAIILASGAEDIHSFVESALIAKVGDLGKKLHTGRSRNDQVATDLKLWCQSEGAALVARLQTLRSELIALAEREFDAVMPGYTHLQRAQPVTFGHWCLAYVEMIERDLSRLTDALKRANTCPLGSGALAGTAYQMDRHSLAVALNFASPTLNSLDSVSDRDHVVELCGAASISMMHLSRMAEDLIFFNSGEAGFISLSDEVTSGSSLMPQKKNPDALELIRGKTGRVYGSLVGILTTMKALPLAYNKDMQEDKEGLFDVVDSWAICLDMAALVLSGLVVNRPNALLAAQQGYANATELADYLVSKGMPFREAHHVVGVAVVAAIAKKIPLEAFSLAEFRTFADIIEADVYPNLTIEACLAKRDVLGGTALTQVKQAIAAKKVI.

It belongs to the lyase 1 family. Argininosuccinate lyase subfamily.

The protein localises to the cytoplasm. The enzyme catalyses 2-(N(omega)-L-arginino)succinate = fumarate + L-arginine. It functions in the pathway amino-acid biosynthesis; L-arginine biosynthesis; L-arginine from L-ornithine and carbamoyl phosphate: step 3/3. The polypeptide is Argininosuccinate lyase (Shewanella sp. (strain MR-7)).